The primary structure comprises 311 residues: Acetyl-coenzyme A carboxylase carboxyl transferase subunit alpha (311 aa).

Residues 36–286 (KLEKEVEKTF…KEYFIKSLAE (251 aa)) form the CoA carboxyltransferase C-terminal domain.

Belongs to the AccA family. Acetyl-CoA carboxylase is a heterohexamer composed of biotin carboxyl carrier protein (AccB), biotin carboxylase (AccC) and two subunits each of ACCase subunit alpha (AccA) and ACCase subunit beta (AccD).

The protein localises to the cytoplasm. It catalyses the reaction N(6)-carboxybiotinyl-L-lysyl-[protein] + acetyl-CoA = N(6)-biotinyl-L-lysyl-[protein] + malonyl-CoA. The protein operates within lipid metabolism; malonyl-CoA biosynthesis; malonyl-CoA from acetyl-CoA: step 1/1. Component of the acetyl coenzyme A carboxylase (ACC) complex. First, biotin carboxylase catalyzes the carboxylation of biotin on its carrier protein (BCCP) and then the CO(2) group is transferred by the carboxyltransferase to acetyl-CoA to form malonyl-CoA. The protein is Acetyl-coenzyme A carboxylase carboxyl transferase subunit alpha of Aliarcobacter butzleri (strain RM4018) (Arcobacter butzleri).